A 194-amino-acid polypeptide reads, in one-letter code: 5-formyltetrahydrofolate cyclo-ligase (194 aa).

ATP is bound by residues 6–10 (KSQLR), 139–146 (GRGAGFYD), and aspartate 177.

It belongs to the 5-formyltetrahydrofolate cyclo-ligase family.

The catalysed reaction is (6S)-5-formyl-5,6,7,8-tetrahydrofolate + ATP = (6R)-5,10-methenyltetrahydrofolate + ADP + phosphate. It functions in the pathway one-carbon metabolism; tetrahydrofolate interconversion. Involved in the removal of 5-formyltetrahydrofolate. In vitro, it is a potent inhibitor of various folate-dependent enzymes in the C1 metabolism network and in vivo it might function as a folate storage. 5-formyltetrahydrofolate is also used as an antifolate rescue agent in cancer chemotherapy. Catalyzes the irreversible ATP-dependent transformation of 5-formyltetrahydrofolate (5-CHO-THF) to form 5,10-methenyltetrahydrofolate (5,10-CH=THF). The reverse reaction is catalyzed by the serine hydroxymethyltransferase GlyA (SHMT). In Mycolicibacterium smegmatis (strain ATCC 700084 / mc(2)155) (Mycobacterium smegmatis), this protein is 5-formyltetrahydrofolate cyclo-ligase.